Reading from the N-terminus, the 323-residue chain is tRNA-dihydrouridine(16) synthase (323 aa).

FMN-binding positions include 7–9 and Gln-68; that span reads PME. Catalysis depends on Cys-98, which acts as the Proton donor. FMN contacts are provided by residues Lys-139, 199 to 201, and 223 to 224; these read NGE and GR.

The protein belongs to the Dus family. DusC subfamily. The cofactor is FMN.

It catalyses the reaction 5,6-dihydrouridine(16) in tRNA + NADP(+) = uridine(16) in tRNA + NADPH + H(+). The enzyme catalyses 5,6-dihydrouridine(16) in tRNA + NAD(+) = uridine(16) in tRNA + NADH + H(+). Catalyzes the synthesis of 5,6-dihydrouridine (D), a modified base found in the D-loop of most tRNAs, via the reduction of the C5-C6 double bond in target uridines. Specifically modifies U16 in tRNAs. The polypeptide is tRNA-dihydrouridine(16) synthase (Pseudomonas putida (strain ATCC 47054 / DSM 6125 / CFBP 8728 / NCIMB 11950 / KT2440)).